The chain runs to 552 residues: Arginine--tRNA ligase (552 aa).

The 'HIGH' region signature appears at 123–133 (ANPTGPLTIGR).

The protein belongs to the class-I aminoacyl-tRNA synthetase family. Monomer.

The protein localises to the cytoplasm. It carries out the reaction tRNA(Arg) + L-arginine + ATP = L-arginyl-tRNA(Arg) + AMP + diphosphate. This is Arginine--tRNA ligase from Chlorobium phaeovibrioides (strain DSM 265 / 1930) (Prosthecochloris vibrioformis (strain DSM 265)).